Here is a 347-residue protein sequence, read N- to C-terminus: N-acetyl-gamma-glutamyl-phosphate reductase (347 aa).

The active site involves cysteine 152.

It belongs to the NAGSA dehydrogenase family. Type 1 subfamily.

Its subcellular location is the cytoplasm. It carries out the reaction N-acetyl-L-glutamate 5-semialdehyde + phosphate + NADP(+) = N-acetyl-L-glutamyl 5-phosphate + NADPH + H(+). The protein operates within amino-acid biosynthesis; L-arginine biosynthesis; N(2)-acetyl-L-ornithine from L-glutamate: step 3/4. Functionally, catalyzes the NADPH-dependent reduction of N-acetyl-5-glutamyl phosphate to yield N-acetyl-L-glutamate 5-semialdehyde. This Neisseria gonorrhoeae (strain ATCC 700825 / FA 1090) protein is N-acetyl-gamma-glutamyl-phosphate reductase.